Reading from the N-terminus, the 623-residue chain is Xaa-Pro aminopeptidase 1 (623 aa).

An a peptide-binding site is contributed by arginine 77. Position 304 is an N6-acetyllysine (lysine 304). Residue histidine 395 participates in a peptide binding. Residues aspartate 415, aspartate 426, and histidine 489 each contribute to the Mn(2+) site. Residues histidine 489, histidine 498, and glutamate 523 each coordinate a peptide. The Mn(2+) site is built by glutamate 523 and glutamate 537.

This sequence belongs to the peptidase M24B family. In terms of assembly, homodimer. The cofactor is Mn(2+). Expressed in all tissues tested, including liver, adrenal decapsular tissue, adrenal capsular tissue, corpus luteum, testis, submandibular gland, thymus, brain, cerebellum and heart. Highest levels in testis.

The protein localises to the cytoplasm. It catalyses the reaction Release of any N-terminal amino acid, including proline, that is linked to proline, even from a dipeptide or tripeptide.. Inhibited by inositol hexakisphosphate. In terms of biological role, metalloaminopeptidase that catalyzes the removal of a penultimate prolyl residue from the N-termini of peptides, such as Arg-Pro-Pro. Contributes to the degradation of bradykinin. This chain is Xaa-Pro aminopeptidase 1, found in Rattus norvegicus (Rat).